The following is a 480-amino-acid chain: MIVADSECRAELKDYLRFAPGGVGDSGPGEEQRESRARRGPRGPSAFIPVEEVLREGAESLEQHLGLEALMSSGRVDNLAVVMGLHPDYFTSFWRLHYLPLHTDGPLASSWRHYIAIMAAARHQCSYLVGSHMAEFLQTGGDPEWLLGLHRAPEKLRKLSEINKLLAHRPWLITKEHIQALLKTGEHTWSLAELIQALVLLTHCHSLSSFVFGCGILPEGDADGSPAPQAPTPPSEQSSPPSRDPLNNSGGFESARDVEALMERMRQLQESLLRDEGTSQEEMESRFELEKSESLLVTPSADILEPSPHPDMLCFVEDPAFGYEDFTRRGAQAPPTFRAQDYTWEDHGYSLIQRLYPEGGQLLDEKFQAAYSLTYNTIAMLSGVDTSVLRRAIWNYIHCVFGIRYDDYDYGEVNQLLERNLKVYIKTVACYPEKTTRRMYNLFWRHFRHSEKVHVNLLLLEARMQAALLYALRAITRYMT.

At Met-1 the chain carries N-acetylmethionine. The disordered stretch occupies residues 20 to 45 (PGGVGDSGPGEEQRESRARRGPRGPS). The N-terminal domain; mediates the alkylhydroperoxide reductase activity stretch occupies residues 66–239 (GLEALMSSGR…APTPPSEQSS (174 aa)). Cys-125 functions as the Cysteine sulfenic acid (-SOH) intermediate in the catalytic mechanism. Residue Lys-175 forms a Glycyl lysine isopeptide (Lys-Gly) (interchain with G-Cter in ubiquitin) linkage. A disordered region spans residues 222–252 (ADGSPAPQAPTPPSEQSSPPSRDPLNNSGGF). Ser-249 carries the phosphoserine modification. The interval 308 to 480 (PHPDMLCFVE…ALRAITRYMT (173 aa)) is C-terminal domain; mediates TORC1 regulation. Residues 374-377 (TYNT), Thr-386, and Glu-451 each bind L-leucine.

It belongs to the sestrin family. As to quaternary structure, interacts with the GATOR2 complex which is composed of MIOS, SEC13, SEH1L, WDR24 and WDR59; the interaction is negatively regulated by leucine. Conveys leucine availability via direct interaction with SEH1L and WDR24 components of the GATOR2 complex. Interacts with RRAGA, RRAGB, RRAGC and RRAGD; may function as a guanine nucleotide dissociation inhibitor for RRAGs and regulate them. May interact with the TORC2 complex. Interacts with KEAP1, RBX1, SQSTM and ULK1; to regulate the degradation of KEAP1. May also associate with the complex composed of TSC1, TSC2 and the AMP-responsive protein kinase/AMPK to regulate TORC1 signaling. May interact with PRDX1. Post-translationally, phosphorylated by ULK1 at multiple sites. Ubiquitinated at Lys-175 by RNF167 via 'Lys-63'-linked polyubiquitination in response to leucine deprivation: ubiquitination promotes SESN2-interaction with the GATOR2 complex, leading to inhibit the TORC1 signaling pathway. Deubiquitinated at Lys-175 by STAMBPL1, promoting the TORC1 signaling pathway. Ubiquitinated by RNF186; ubiquitination mediates proteasomal degradation.

The protein resides in the cytoplasm. It carries out the reaction a hydroperoxide + L-cysteinyl-[protein] = S-hydroxy-L-cysteinyl-[protein] + an alcohol. In terms of biological role, functions as an intracellular leucine sensor that negatively regulates the mTORC1 signaling pathway through the GATOR complex. In absence of leucine, binds the GATOR subcomplex GATOR2 and prevents mTORC1 signaling. Binding of leucine to SESN2 disrupts its interaction with GATOR2 thereby activating the TORC1 signaling pathway. This stress-inducible metabolic regulator also plays a role in protection against oxidative and genotoxic stresses. May negatively regulate protein translation in response to endoplasmic reticulum stress, via mTORC1. May positively regulate the transcription by NFE2L2 of genes involved in the response to oxidative stress by facilitating the SQSTM1-mediated autophagic degradation of KEAP1. May also mediate TP53 inhibition of TORC1 signaling upon genotoxic stress. Moreover, may prevent the accumulation of reactive oxygen species (ROS) through the alkylhydroperoxide reductase activity born by the N-terminal domain of the protein. Was originally reported to contribute to oxidative stress resistance by reducing PRDX1. However, this could not be confirmed. The polypeptide is Sestrin-2 (Pongo abelii (Sumatran orangutan)).